Here is a 417-residue protein sequence, read N- to C-terminus: Serine hydroxymethyltransferase (417 aa).

(6S)-5,6,7,8-tetrahydrofolate-binding positions include Leu-121 and 125 to 127 (GHL). Lys-229 carries the N6-(pyridoxal phosphate)lysine modification. 354 to 356 (SPF) serves as a coordination point for (6S)-5,6,7,8-tetrahydrofolate.

It belongs to the SHMT family. Homodimer. Pyridoxal 5'-phosphate is required as a cofactor.

It is found in the cytoplasm. It catalyses the reaction (6R)-5,10-methylene-5,6,7,8-tetrahydrofolate + glycine + H2O = (6S)-5,6,7,8-tetrahydrofolate + L-serine. It participates in one-carbon metabolism; tetrahydrofolate interconversion. It functions in the pathway amino-acid biosynthesis; glycine biosynthesis; glycine from L-serine: step 1/1. Catalyzes the reversible interconversion of serine and glycine with tetrahydrofolate (THF) serving as the one-carbon carrier. This reaction serves as the major source of one-carbon groups required for the biosynthesis of purines, thymidylate, methionine, and other important biomolecules. Also exhibits THF-independent aldolase activity toward beta-hydroxyamino acids, producing glycine and aldehydes, via a retro-aldol mechanism. The sequence is that of Serine hydroxymethyltransferase from Stutzerimonas stutzeri (strain A1501) (Pseudomonas stutzeri).